Consider the following 99-residue polypeptide: Protein Frey (99 aa).

Residues 10 to 29 form a helical membrane-spanning segment; sequence YPRAGLSLFLFYLILAGALL. The tract at residues 60 to 90 is disordered; that stretch reads DYGLRPKHPRPGGPRPLLSQAQQRKRDGPNM.

Interacts with SPPL2C (via active sites); the interaction stabilizes FREY1 protein and inhibits SPPL2C proteolytic activity. Interacts with IZUMO1; the interaction retains IZUMO1 at the endoplasmic reticulum membrane and coordinates IZUMO1 complex assembly. Expressed in round spermatids (at protein level).

It localises to the endoplasmic reticulum membrane. Functionally, key regulator for male fertility expressed transiently in round spermatids where it recruits IZUMO1 at the endoplasmic reticulum (ER) membrane and coordinates the oolemmal binding multimeric complex (IZUMO1 complex) assembly. Upon complete assembly of the IZUMO1 complex, its ER retention is released, facilitating IZUMO1 complex export to the acrosome. Through the interaction with SPPL2C, inhibits its intramembrane protease activity directly accessing the catalytic center of an I-CLiP. The chain is Protein Frey from Mus musculus (Mouse).